A 206-amino-acid chain; its full sequence is Small ribosomal subunit protein uS4 (206 aa).

The S4 RNA-binding domain occupies 96-156; sequence SRLDNVVYRM…EKSKKQVRIA (61 aa).

This sequence belongs to the universal ribosomal protein uS4 family. As to quaternary structure, part of the 30S ribosomal subunit. Contacts protein S5. The interaction surface between S4 and S5 is involved in control of translational fidelity.

In terms of biological role, one of the primary rRNA binding proteins, it binds directly to 16S rRNA where it nucleates assembly of the body of the 30S subunit. Functionally, with S5 and S12 plays an important role in translational accuracy. The polypeptide is Small ribosomal subunit protein uS4 (Laribacter hongkongensis (strain HLHK9)).